The primary structure comprises 456 residues: Methylenetetrahydrofolate--tRNA-(uracil-5-)-methyltransferase TrmFO (456 aa).

9-14 (GGGMAG) lines the FAD pocket.

It belongs to the MnmG family. TrmFO subfamily. The cofactor is FAD.

The protein localises to the cytoplasm. The enzyme catalyses uridine(54) in tRNA + (6R)-5,10-methylene-5,6,7,8-tetrahydrofolate + NADH + H(+) = 5-methyluridine(54) in tRNA + (6S)-5,6,7,8-tetrahydrofolate + NAD(+). It catalyses the reaction uridine(54) in tRNA + (6R)-5,10-methylene-5,6,7,8-tetrahydrofolate + NADPH + H(+) = 5-methyluridine(54) in tRNA + (6S)-5,6,7,8-tetrahydrofolate + NADP(+). Functionally, catalyzes the folate-dependent formation of 5-methyl-uridine at position 54 (M-5-U54) in all tRNAs. This is Methylenetetrahydrofolate--tRNA-(uracil-5-)-methyltransferase TrmFO from Novosphingobium aromaticivorans (strain ATCC 700278 / DSM 12444 / CCUG 56034 / CIP 105152 / NBRC 16084 / F199).